Here is a 256-residue protein sequence, read N- to C-terminus: Imidazole glycerol phosphate synthase subunit HisF (256 aa).

Active-site residues include D12 and D131.

Belongs to the HisA/HisF family. In terms of assembly, heterodimer of HisH and HisF.

Its subcellular location is the cytoplasm. The enzyme catalyses 5-[(5-phospho-1-deoxy-D-ribulos-1-ylimino)methylamino]-1-(5-phospho-beta-D-ribosyl)imidazole-4-carboxamide + L-glutamine = D-erythro-1-(imidazol-4-yl)glycerol 3-phosphate + 5-amino-1-(5-phospho-beta-D-ribosyl)imidazole-4-carboxamide + L-glutamate + H(+). It participates in amino-acid biosynthesis; L-histidine biosynthesis; L-histidine from 5-phospho-alpha-D-ribose 1-diphosphate: step 5/9. Functionally, IGPS catalyzes the conversion of PRFAR and glutamine to IGP, AICAR and glutamate. The HisF subunit catalyzes the cyclization activity that produces IGP and AICAR from PRFAR using the ammonia provided by the HisH subunit. This is Imidazole glycerol phosphate synthase subunit HisF from Thermobifida fusca (strain YX).